The sequence spans 386 residues: Chaperone protein DnaJ (386 aa).

Residues 6-71 form the J domain; the sequence is DYYEILGVDR…QKRARYDQFG (66 aa). Residues 144-226 form a CR-type zinc finger; it reads GTEKEVTVSR…CGGKGRVRKH (83 aa). Residues C157, C160, C174, C177, C200, C203, C214, and C217 each contribute to the Zn(2+) site. 4 CXXCXGXG motif repeats span residues 157–164, 174–181, 200–207, and 214–221; these read CPTCSGSG, CRQCNGTG, CDVCHGEG, and CETCGGKG.

Belongs to the DnaJ family. As to quaternary structure, homodimer. It depends on Zn(2+) as a cofactor.

The protein localises to the cytoplasm. Its function is as follows. Participates actively in the response to hyperosmotic and heat shock by preventing the aggregation of stress-denatured proteins and by disaggregating proteins, also in an autonomous, DnaK-independent fashion. Unfolded proteins bind initially to DnaJ; upon interaction with the DnaJ-bound protein, DnaK hydrolyzes its bound ATP, resulting in the formation of a stable complex. GrpE releases ADP from DnaK; ATP binding to DnaK triggers the release of the substrate protein, thus completing the reaction cycle. Several rounds of ATP-dependent interactions between DnaJ, DnaK and GrpE are required for fully efficient folding. Also involved, together with DnaK and GrpE, in the DNA replication of plasmids through activation of initiation proteins. The protein is Chaperone protein DnaJ of Acetivibrio thermocellus (strain ATCC 27405 / DSM 1237 / JCM 9322 / NBRC 103400 / NCIMB 10682 / NRRL B-4536 / VPI 7372) (Clostridium thermocellum).